The following is a 1170-amino-acid chain: Error-prone DNA polymerase (1170 aa).

Disordered regions lie at residues 867-899 and 1129-1170; these read RGARSANPESRDSGFALRAPRNDNDRQIPLHND and IPHG…RDFH. Residues 886–899 are compositionally biased toward basic and acidic residues; it reads PRNDNDRQIPLHND.

It belongs to the DNA polymerase type-C family. DnaE2 subfamily.

The protein localises to the cytoplasm. It catalyses the reaction DNA(n) + a 2'-deoxyribonucleoside 5'-triphosphate = DNA(n+1) + diphosphate. DNA polymerase involved in damage-induced mutagenesis and translesion synthesis (TLS). It is not the major replicative DNA polymerase. This Bradyrhizobium sp. (strain ORS 278) protein is Error-prone DNA polymerase.